Consider the following 227-residue polypeptide: UPF0758 protein Spro_4842 (227 aa).

The region spanning 105-227 (AMLNPRMTQH…CVSFAERGWL (123 aa)) is the MPN domain. Positions 176, 178, and 189 each coordinate Zn(2+). Residues 176–189 (HNHPSGKAEPSHAD) carry the JAMM motif motif.

It belongs to the UPF0758 family. YicR subfamily.

This is UPF0758 protein Spro_4842 from Serratia proteamaculans (strain 568).